We begin with the raw amino-acid sequence, 1061 residues long: E3 SUMO-protein ligase ZNF451 (1061 aa).

The interval 1 to 38 is disordered; sequence MGDPGSEIIESVPPAGPEASESTTDENEDDIQFVSEGP. Positions 1 to 246 are sufficient for E3 SUMO-protein ligase activity; the sequence is MGDPGSEIIE…TDDGHNNNLL (246 aa). Positions 1–344 are important for interaction with SUMO1 and SUMO2; sequence MGDPGSEIIE…RVHCRNAGPV (344 aa). The interaction with SUMO2 1 stretch occupies residues 30 to 37; the sequence is DIQFVSEG. The PLRP motif lies at 38 to 41; it reads PLRP. The interaction with SUMO2 2 stretch occupies residues 42–50; the sequence is VLEYIDLVS. Residues Lys75, Lys77, Lys106, Ile121, Ala130, Leu138, Lys139, Lys144, and Lys153 each participate in a glycyl lysine isopeptide (Lys-Gly) (interchain with G-Cter in SUMO2) cross-link. Ser155 carries the post-translational modification Phosphoserine. Omega-N-methylarginine is present on Arg158. Residues Val164 and Lys167 each participate in a glycyl lysine isopeptide (Lys-Gly) (interchain with G-Cter in SUMO2) cross-link. The segment at 168–525 is important for interaction with SMAD4; it reads PILCPIMHCN…HMSRIHGGAH (358 aa). A C2H2-type 1 zinc finger spans residues 169-195; sequence ILCPIMHCNKEFDNGHLLLGHLKRFDH. Residues Gln226, Gly240, Pro247, Ser263, Lys270, Lys275, Lys283, Asp286, Lys288, Pro293, Lys301, and Lys309 each participate in a glycyl lysine isopeptide (Lys-Gly) (interchain with G-Cter in SUMO2) cross-link. The segment at 253–277 adopts a C2H2-type 2 zinc-finger fold; it reads FACPNCFLLFSRKEECSKHMSGKNH. The segment at 315-337 adopts a C2H2-type 3 zinc-finger fold; it reads VKCVACHKTLRSHMELTAHFRVH. Residue Lys357 forms a Glycyl lysine isopeptide (Lys-Gly) (interchain with G-Cter in SUMO2) linkage. A C2H2-type 4 zinc finger spans residues 362-386; sequence GYCPDCNQVFVDETSTQNHKQNSGH. Residue Lys423 forms a Glycyl lysine isopeptide (Lys-Gly) (interchain with G-Cter in SUMO2) linkage. Ser432 carries the post-translational modification Phosphoserine. Residues Lys434, Lys446, Lys452, Lys454, Lys464, Phe473, Val490, Cys500, Lys505, Asp508, Gly522, Trp532, Lys543, and Lys585 each participate in a glycyl lysine isopeptide (Lys-Gly) (interchain with G-Cter in SUMO2) cross-link. The segment at 498–521 adopts a C2H2-type 5 zinc-finger fold; the sequence is YKCVVCGKVCDDSGVIRLHMSRIH. Residues 531–554 form a C2H2-type 6 zinc finger; it reads FWCRTCKKELTRKDTIMAHVTEFH. A C2H2-type 7; atypical zinc finger spans residues 606-631; sequence WQCRICEDMFDSQEYVKQHCMSLASH. Glycyl lysine isopeptide (Lys-Gly) (interchain with G-Cter in SUMO2) cross-links involve residues Lys632, Lys647, and Lys664. The segment at 636-659 adopts a C2H2-type 8 zinc-finger fold; it reads YSCAHCRKPFHKIETLYRHCQDEH. Residues 667–690 form a C2H2-type 9 zinc finger; that stretch reads YFCGLCDLIFNVEEAFLSHYEEHH. Residue Lys706 forms a Glycyl lysine isopeptide (Lys-Gly) (interchain with G-Cter in SUMO1); alternate linkage. Lys706 is covalently cross-linked (Glycyl lysine isopeptide (Lys-Gly) (interchain with G-Cter in SUMO2); alternate). Residues Lys731 and Lys748 each participate in a glycyl lysine isopeptide (Lys-Gly) (interchain with G-Cter in SUMO2) cross-link. The segment at 753–776 adopts a C2H2-type 10 zinc-finger fold; the sequence is FRCSLCSATAQNLTDMNTHIHQVH. Glycyl lysine isopeptide (Lys-Gly) (interchain with G-Cter in SUMO2) cross-links involve residues Lys777, Lys779, Lys790, Lys817, Lys827, Lys832, Lys843, Lys845, Lys852, Lys951, Lys992, and Lys993. Residues 789-812 form a C2H2-type 11 zinc finger; sequence IKCGTCTKAFHDPESAQQHFHRKH. The segment at 1050-1061 is important for ubiquitin binding; the sequence is LEEAIRRSLEEM.

It belongs to the krueppel C2H2-type zinc-finger protein family. As to quaternary structure, homooligomer. Interacts (via N-terminal region) with SUMO1. Interacts (via N-terminal region) with SUMO2. Interacts simultaneously with two SUMO2 chains. Identified in a complex with SUMO2 and UBE2I/UBC9, where one ZNF451 interacts with one UBE2I/UBC9 and two SUMO2 chains, one bound to the UBE2I/UBC9 active site and the other to another region of the same UBE2I/UBC9 molecule. Interacts (via C-terminus) with ubiquitin. Interacts (via N-terminal zinc-finger domains) with SMAD4 (via MH2 domain). Interacts with SMAD2 and SMAD3. Identified in a complex that contains at least ZNF451, SMAD2, SMAD3 and SMAD4. Interacts with EP300. Inhibits interaction between EP300 and the SMAD4 complex. Interacts with SIMC1. In terms of processing, sumoylated. Predominantly sumoylated on the N-terminal region that is important for interaction with SUMO1 and SUMO2. Sumoylation is important for localization in nuclear granules; desumoylation leads to diffuse nucleoplasmic location. Autosumoylated (in vitro). Sumoylation enhances E3 SUMO-protein ligase activity.

The protein resides in the nucleus. It localises to the PML body. Its subcellular location is the nucleoplasm. The protein operates within protein modification; protein sumoylation. E3 SUMO-protein ligase; has a preference for SUMO2 and SUMO3 and facilitates UBE2I/UBC9-mediated sumoylation of target proteins. Plays a role in protein SUMO2 modification in response to stress caused by DNA damage and by proteasome inhibitors (in vitro). Required for MCM4 sumoylation. Has no activity with SUMO1. Preferentially transfers an additional SUMO2 chain onto the SUMO2 consensus site 'Lys-11'. Negatively regulates transcriptional activation mediated by the SMAD4 complex in response to TGF-beta signaling. Inhibits EP300-mediated acetylation of histone H3 at 'Lys-9'. Plays a role in regulating the transcription of AR targets. This Homo sapiens (Human) protein is E3 SUMO-protein ligase ZNF451 (ZNF451).